The following is a 682-amino-acid chain: Glucan endo-1,3-beta-glucosidase A1 (682 aa).

An N-terminal signal peptide occupies residues 1–38; it reads MKPSHFTEKRFMKKVLGLFLVVVMLASVGVLPTSKVQA. The region spanning 391 to 682 is the GH16 domain; the sequence is YTFIGNPNAP…VDYVRVYKEQ (292 aa). The Nucleophile role is filled by glutamate 552. The active-site Proton donor is glutamate 557.

The protein belongs to the glycosyl hydrolase 16 family.

It is found in the secreted. The catalysed reaction is Hydrolysis of (1-&gt;3)-beta-D-glucosidic linkages in (1-&gt;3)-beta-D-glucans.. Its function is as follows. Lysis of cellular walls containing beta-1,3-glucans. Implicated in the defense against fungal pathogens. This chain is Glucan endo-1,3-beta-glucosidase A1 (glcA), found in Niallia circulans (Bacillus circulans).